A 190-amino-acid polypeptide reads, in one-letter code: Adenine phosphoribosyltransferase (190 aa).

Belongs to the purine/pyrimidine phosphoribosyltransferase family. Homodimer.

The protein resides in the cytoplasm. It carries out the reaction AMP + diphosphate = 5-phospho-alpha-D-ribose 1-diphosphate + adenine. It participates in purine metabolism; AMP biosynthesis via salvage pathway; AMP from adenine: step 1/1. Catalyzes a salvage reaction resulting in the formation of AMP, that is energically less costly than de novo synthesis. The sequence is that of Adenine phosphoribosyltransferase from Treponema pallidum (strain Nichols).